Consider the following 335-residue polypeptide: Biotin synthase (335 aa).

Positions tyrosine 46–arginine 274 constitute a Radical SAM core domain. Residues cysteine 61, cysteine 65, and cysteine 68 each contribute to the [4Fe-4S] cluster site. 4 residues coordinate [2Fe-2S] cluster: cysteine 105, cysteine 137, cysteine 197, and arginine 269.

It belongs to the radical SAM superfamily. Biotin synthase family. As to quaternary structure, homodimer. The cofactor is [4Fe-4S] cluster. Requires [2Fe-2S] cluster as cofactor.

The enzyme catalyses (4R,5S)-dethiobiotin + (sulfur carrier)-SH + 2 reduced [2Fe-2S]-[ferredoxin] + 2 S-adenosyl-L-methionine = (sulfur carrier)-H + biotin + 2 5'-deoxyadenosine + 2 L-methionine + 2 oxidized [2Fe-2S]-[ferredoxin]. Its pathway is cofactor biosynthesis; biotin biosynthesis; biotin from 7,8-diaminononanoate: step 2/2. Catalyzes the conversion of dethiobiotin (DTB) to biotin by the insertion of a sulfur atom into dethiobiotin via a radical-based mechanism. The protein is Biotin synthase of Prochlorococcus marinus (strain AS9601).